Consider the following 348-residue polypeptide: Alanine racemase (348 aa).

The Proton acceptor; specific for D-alanine role is filled by Lys34. At Lys34 the chain carries N6-(pyridoxal phosphate)lysine. Arg127 serves as a coordination point for substrate. Tyr243 acts as the Proton acceptor; specific for L-alanine in catalysis. Substrate is bound at residue Met291.

This sequence belongs to the alanine racemase family. Pyridoxal 5'-phosphate is required as a cofactor.

It carries out the reaction L-alanine = D-alanine. The protein operates within amino-acid biosynthesis; D-alanine biosynthesis; D-alanine from L-alanine: step 1/1. Its function is as follows. Catalyzes the interconversion of L-alanine and D-alanine. May also act on other amino acids. This Coprothermobacter proteolyticus (strain ATCC 35245 / DSM 5265 / OCM 4 / BT) protein is Alanine racemase (alr).